A 457-amino-acid polypeptide reads, in one-letter code: Argininosuccinate lyase (457 aa).

The protein belongs to the lyase 1 family. Argininosuccinate lyase subfamily.

The protein resides in the cytoplasm. It carries out the reaction 2-(N(omega)-L-arginino)succinate = fumarate + L-arginine. It functions in the pathway amino-acid biosynthesis; L-arginine biosynthesis; L-arginine from L-ornithine and carbamoyl phosphate: step 3/3. The chain is Argininosuccinate lyase from Sodalis glossinidius (strain morsitans).